Consider the following 159-residue polypeptide: NAD(P)H-quinone oxidoreductase subunit J, chloroplastic (159 aa).

It belongs to the complex I 30 kDa subunit family. In terms of assembly, NDH is composed of at least 16 different subunits, 5 of which are encoded in the nucleus.

Its subcellular location is the plastid. It is found in the chloroplast thylakoid membrane. It catalyses the reaction a plastoquinone + NADH + (n+1) H(+)(in) = a plastoquinol + NAD(+) + n H(+)(out). The catalysed reaction is a plastoquinone + NADPH + (n+1) H(+)(in) = a plastoquinol + NADP(+) + n H(+)(out). In terms of biological role, NDH shuttles electrons from NAD(P)H:plastoquinone, via FMN and iron-sulfur (Fe-S) centers, to quinones in the photosynthetic chain and possibly in a chloroplast respiratory chain. The immediate electron acceptor for the enzyme in this species is believed to be plastoquinone. Couples the redox reaction to proton translocation, and thus conserves the redox energy in a proton gradient. The sequence is that of NAD(P)H-quinone oxidoreductase subunit J, chloroplastic from Populus trichocarpa (Western balsam poplar).